A 381-amino-acid polypeptide reads, in one-letter code: Chaperone protein DnaJ (381 aa).

The region spanning 5 to 70 is the J domain; that stretch reads DFYEVLGVSR…QKKAAYDQYG (66 aa). Residues 136–214 form a CR-type zinc finger; that stretch reads GVSKEIEVPT…CHGQGRKQKT (79 aa). Zn(2+) contacts are provided by Cys149, Cys152, Cys166, Cys169, Cys188, Cys191, Cys202, and Cys205. 4 CXXCXGXG motif repeats span residues 149 to 156, 166 to 173, 188 to 195, and 202 to 209; these read CDICDGSG, CGTCHGHG, CPTCNGKG, and CNSCHGQG.

Belongs to the DnaJ family. As to quaternary structure, homodimer. It depends on Zn(2+) as a cofactor.

It is found in the cytoplasm. Its function is as follows. Participates actively in the response to hyperosmotic and heat shock by preventing the aggregation of stress-denatured proteins and by disaggregating proteins, also in an autonomous, DnaK-independent fashion. Unfolded proteins bind initially to DnaJ; upon interaction with the DnaJ-bound protein, DnaK hydrolyzes its bound ATP, resulting in the formation of a stable complex. GrpE releases ADP from DnaK; ATP binding to DnaK triggers the release of the substrate protein, thus completing the reaction cycle. Several rounds of ATP-dependent interactions between DnaJ, DnaK and GrpE are required for fully efficient folding. Also involved, together with DnaK and GrpE, in the DNA replication of plasmids through activation of initiation proteins. The sequence is that of Chaperone protein DnaJ from Vibrio atlanticus (strain LGP32) (Vibrio splendidus (strain Mel32)).